The following is a 277-amino-acid chain: MGIKTYKPKTSSLRYKTTLSFDDLSKGNDPLKSLTKGKKLKSGRDSSGRISIRRRGGGHKRKYRLIDFNRRDKFSIPARVASIEYDPNRSANIALLVYKDGEKRYIISPKGIKVGDVLESGPNAPIKIGNALPLENIPIGRTIHNIELNVGKGGQLVRSAGGYAMILASDGNYVTVKLSSGEMRLIFKKCIATIGEIGNEDYANVSIGKAGKSRWLGRRPKVRGVAMNPVDHPHGGGEGKTSGGRHPVSPWGQPTKGYKTRKKKRYSDKFIIKRRNK.

Disordered regions lie at residues 32–58 and 225–277; these read KSLTKGKKLKSGRDSSGRISIRRRGGG and VAMN…RRNK. Residues 258–277 are compositionally biased toward basic residues; sequence YKTRKKKRYSDKFIIKRRNK.

Belongs to the universal ribosomal protein uL2 family. In terms of assembly, part of the 50S ribosomal subunit. Forms a bridge to the 30S subunit in the 70S ribosome.

Its function is as follows. One of the primary rRNA binding proteins. Required for association of the 30S and 50S subunits to form the 70S ribosome, for tRNA binding and peptide bond formation. It has been suggested to have peptidyltransferase activity; this is somewhat controversial. Makes several contacts with the 16S rRNA in the 70S ribosome. In Borrelia garinii subsp. bavariensis (strain ATCC BAA-2496 / DSM 23469 / PBi) (Borreliella bavariensis), this protein is Large ribosomal subunit protein uL2.